The primary structure comprises 467 residues: Transcription factor bHLH3 (467 aa).

In terms of domain architecture, bHLH spans 316–365; that stretch reads EEALNHVEAERQRREKLNQRFYALRAVVPNISKMDKASLLADAITYITDM.

As to quaternary structure, homodimer.

It is found in the nucleus. The polypeptide is Transcription factor bHLH3 (BHLH3) (Arabidopsis thaliana (Mouse-ear cress)).